The sequence spans 450 residues: Cell division cycle 20.5, cofactor of APC complex (450 aa).

WD repeat units follow at residues 129–166, 171–210, 214–251, 255–294, 304–346, 348–389, and 392–431; these read ADDFYLNLLDWGSSNVLAIALGDTVYLWDASSGSTYKL, EEEGPVTSINWTQDGLDLAIGLDNSEVQLWDCVSNRQVRT, GHESRVGSLAWNNHILTTGGMDGKIVNNDVRIRSSIVE, GHTEEVCGLKWSESGKKLASGGNDNVVHIWDHRSVASSNP, EHTA…CLNS, ETGS…KMAE, and GHTSRVLFMAQSPDGCTVASAAGDETLRLWNVFGEPPKTT.

Belongs to the WD repeat CDC20/Fizzy family. The APC/C is composed of at least 11 subunits that stay tightly associated throughout the cell cycle. Binds to GIG1 and PYM. Part of the mitotic checkpoint complex (MCC); interacts with MAD2 and BUB1.

The protein localises to the nucleus. Its pathway is protein modification; protein ubiquitination. Component of the anaphase promoting complex/cyclosome (APC/C), a cell cycle-regulated E3 ubiquitin-protein ligase complex that controls progression through mitosis and the G1 phase of the cell cycle. In Arabidopsis thaliana (Mouse-ear cress), this protein is Cell division cycle 20.5, cofactor of APC complex (CDC20-5).